Here is a 213-residue protein sequence, read N- to C-terminus: Pyridoxine/pyridoxamine 5'-phosphate oxidase (213 aa).

FMN is bound by residues 60-65, 75-76, Lys82, and Gln104; these read RMVLMK and YS. Lys65 is a binding site for substrate. Substrate-binding residues include Tyr122 and Arg126. Residues 139 to 140 and Trp184 each bind FMN; that span reads QS. Substrate is bound at residue 190–192; sequence RLH. Arg194 contacts FMN.

It belongs to the pyridoxamine 5'-phosphate oxidase family. Homodimer. The cofactor is FMN.

It catalyses the reaction pyridoxamine 5'-phosphate + O2 + H2O = pyridoxal 5'-phosphate + H2O2 + NH4(+). The enzyme catalyses pyridoxine 5'-phosphate + O2 = pyridoxal 5'-phosphate + H2O2. Its pathway is cofactor metabolism; pyridoxal 5'-phosphate salvage; pyridoxal 5'-phosphate from pyridoxamine 5'-phosphate: step 1/1. It participates in cofactor metabolism; pyridoxal 5'-phosphate salvage; pyridoxal 5'-phosphate from pyridoxine 5'-phosphate: step 1/1. Catalyzes the oxidation of either pyridoxine 5'-phosphate (PNP) or pyridoxamine 5'-phosphate (PMP) into pyridoxal 5'-phosphate (PLP). The sequence is that of Pyridoxine/pyridoxamine 5'-phosphate oxidase from Rhodopseudomonas palustris (strain BisA53).